Consider the following 177-residue polypeptide: Bifunctional protein PyrR (177 aa).

Residues 99-111 (VVLVDDVIYKGRT) carry the PRPP-binding motif.

It belongs to the purine/pyrimidine phosphoribosyltransferase family. PyrR subfamily.

The enzyme catalyses UMP + diphosphate = 5-phospho-alpha-D-ribose 1-diphosphate + uracil. In terms of biological role, regulates the transcription of the pyrimidine nucleotide (pyr) operon in response to exogenous pyrimidines. Functionally, also displays a weak uracil phosphoribosyltransferase activity which is not physiologically significant. This Gloeothece citriformis (strain PCC 7424) (Cyanothece sp. (strain PCC 7424)) protein is Bifunctional protein PyrR.